The sequence spans 115 residues: Large ribosomal subunit protein bL20c (115 aa).

Belongs to the bacterial ribosomal protein bL20 family.

It localises to the plastid. Its subcellular location is the chloroplast. Binds directly to 23S ribosomal RNA and is necessary for the in vitro assembly process of the 50S ribosomal subunit. It is not involved in the protein synthesizing functions of that subunit. This is Large ribosomal subunit protein bL20c from Angiopteris evecta (Mule's foot fern).